Here is a 129-residue protein sequence, read N- to C-terminus: Probable tautomerase YrdN (129 aa).

Pro2 acts as the Proton acceptor; via imino nitrogen in catalysis.

This sequence belongs to the 4-oxalocrotonate tautomerase family.

In terms of biological role, putative target of GltR. This Bacillus subtilis (strain 168) protein is Probable tautomerase YrdN (yrdN).